The following is a 951-amino-acid chain: 5'-3' exoribonuclease 2 (951 aa).

The CCHC-type zinc finger occupies 262-278 (PCALCNQFGHEVKDCEG). An N6-acetyllysine modification is found at K286. A disordered region spans residues 408-508 (KDDEDSFRRR…SDSEPEPEDN (101 aa)). A compositionally biased stretch (basic residues) spans 416-426 (RRQKEKRKRMK). At T439 the chain carries Phosphothreonine. Polar residues-rich tracts occupy residues 445 to 458 (SRNS…SNPR) and 467 to 485 (QRNS…SDGS). Phosphoserine occurs at positions 448, 471, 473, 475, 482, 487, 499, 501, and 678. An asymmetric dimethylarginine; alternate mark is found at R824, R847, and R851. Omega-N-methylarginine; alternate occurs at positions 824, 847, and 851. Position 880 is an asymmetric dimethylarginine (R880). The residue at position 883 (R883) is an Asymmetric dimethylarginine; alternate. Residue R883 is modified to Omega-N-methylarginine; alternate. At R895 the chain carries Omega-N-methylarginine. The interval 907 to 951 (NQYQMLGGPGGYPPRRDDHRGGRQGYPREGRKYPLPPPSGRYSWN) is disordered. A compositionally biased stretch (basic and acidic residues) spans 920-938 (PRRDDHRGGRQGYPREGRK). An Asymmetric dimethylarginine; alternate modification is found at R947. At R947 the chain carries Omega-N-methylarginine; alternate.

The protein belongs to the 5'-3' exonuclease family. XRN2/RAT1 subfamily. In terms of assembly, interacts with POLR2A and SMN1/SMN2. Interacts with CDKN2AIP and NKRF. Interacts with CDKN2AIPNL; the interaction is direct. Interacts with TRIM71 (via NHL repeats) in an RNA-dependent manner. Interacts with DHX34; the interaction is RNA-independent. Expressed in the spleen, testis, heart, brain, lung, liver, skeletal muscle, and kidney.

The protein localises to the nucleus. It is found in the nucleolus. Functionally, possesses 5'-&gt;3' exoribonuclease activity. May promote the termination of transcription by RNA polymerase II. During transcription termination, cleavage at the polyadenylation site liberates a 5' fragment which is subsequently processed to form the mature mRNA and a 3' fragment which remains attached to the elongating polymerase. The processive degradation of this 3' fragment by this protein may promote termination of transcription. Binds to RNA polymerase II (RNAp II) transcription termination R-loops formed by G-rich pause sites. This is 5'-3' exoribonuclease 2 (Xrn2) from Mus musculus (Mouse).